Here is a 328-residue protein sequence, read N- to C-terminus: Type II secretion system protein K (328 aa).

Residues 1–7 constitute a propeptide, leader sequence; the sequence is MRSRQRG. A helical membrane pass occupies residues 8–28; the sequence is AALLVVLLILALMVTIAAVIT. At 29–328 the chain is on the periplasmic side; the sequence is ERTGKAFLRT…QYGGYRTVNP (300 aa).

It belongs to the GSP K family. Type II secretion is composed of four main components: the outer membrane complex, the inner membrane complex, the cytoplasmic secretion ATPase and the periplasm-spanning pseudopilus. Interacts with core component OutG. Cleaved by prepilin peptidase.

Its subcellular location is the cell inner membrane. In terms of biological role, component of the type II secretion system required for the energy-dependent secretion of extracellular factors such as proteases and toxins from the periplasm. Plays a role in pseudopilus assembly and seems to control its length. Interacts with the pseudopilus tip complex that is critical for the recognition and binding of secretion substrates. The chain is Type II secretion system protein K (outK) from Pectobacterium carotovorum subsp. carotovorum (Erwinia carotovora subsp. carotovora).